The sequence spans 158 residues: Large ribosomal subunit protein uL15 (158 aa).

Positions Met-1 to Thr-13 are enriched in basic and acidic residues. Residues Met-1–Ala-45 are disordered. Residues Arg-21 to Val-35 show a composition bias toward gly residues.

This sequence belongs to the universal ribosomal protein uL15 family. In terms of assembly, part of the 50S ribosomal subunit.

Binds to the 23S rRNA. The chain is Large ribosomal subunit protein uL15 from Rhizobium johnstonii (strain DSM 114642 / LMG 32736 / 3841) (Rhizobium leguminosarum bv. viciae).